Consider the following 658-residue polypeptide: Glycogen debranching enzyme (658 aa).

Asp-336 (nucleophile) is an active-site residue. The active-site Proton donor is Glu-371. Residues 459-484 form a disordered region; sequence EANGEENRDGTNSNYSDNHGKEGLGG.

This sequence belongs to the glycosyl hydrolase 13 family.

The enzyme catalyses Hydrolysis of (1-&gt;6)-alpha-D-glucosidic linkages to branches with degrees of polymerization of three or four glucose residues in limit dextrin.. It participates in glycan degradation; glycogen degradation. Functionally, removes maltotriose and maltotetraose chains that are attached by 1,6-alpha-linkage to the limit dextrin main chain, generating a debranched limit dextrin. The chain is Glycogen debranching enzyme from Salmonella dublin (strain CT_02021853).